Reading from the N-terminus, the 128-residue chain is QECKCHVSGSCTLRTCWRALSDFRRTGDYLRRRMNGAVQVMATQDGANFTSARQGYRRATRTDLVYFDNSPDYCVLDKAAGSLGTAGRVCSKTSKGTDGCEIMCCGRGYDTTRVTRVTQCECKFHWCC.

Disulfide bonds link Cys-3–Cys-16 and Cys-5–Cys-11. Ser-8 is lipidated: O-palmitoleoyl serine; by PORCN. N-linked (GlcNAc...) asparagine glycosylation is present at Asn-48. Disulfide bonds link Cys-90–Cys-105 and Cys-127–Cys-128.

This sequence belongs to the Wnt family. In terms of processing, palmitoleoylation is required for efficient binding to frizzled receptors. Depalmitoleoylation leads to Wnt signaling pathway inhibition.

It localises to the secreted. The protein resides in the extracellular space. It is found in the extracellular matrix. Ligand for members of the frizzled family of seven transmembrane receptors. Functions in the canonical Wnt/beta-catenin signaling pathway. The chain is Protein Wnt-2b-B (wnt2b-b) from Xenopus laevis (African clawed frog).